We begin with the raw amino-acid sequence, 126 residues long: Aspartate 1-decarboxylase (126 aa).

Residue serine 25 is the Schiff-base intermediate with substrate; via pyruvic acid of the active site. Serine 25 carries the post-translational modification Pyruvic acid (Ser). Threonine 57 serves as a coordination point for substrate. Residue tyrosine 58 is the Proton donor of the active site. 73–75 contributes to the substrate binding site; that stretch reads GAA.

This sequence belongs to the PanD family. In terms of assembly, heterooctamer of four alpha and four beta subunits. Pyruvate is required as a cofactor. Is synthesized initially as an inactive proenzyme, which is activated by self-cleavage at a specific serine bond to produce a beta-subunit with a hydroxyl group at its C-terminus and an alpha-subunit with a pyruvoyl group at its N-terminus.

Its subcellular location is the cytoplasm. The enzyme catalyses L-aspartate + H(+) = beta-alanine + CO2. The protein operates within cofactor biosynthesis; (R)-pantothenate biosynthesis; beta-alanine from L-aspartate: step 1/1. Catalyzes the pyruvoyl-dependent decarboxylation of aspartate to produce beta-alanine. This chain is Aspartate 1-decarboxylase, found in Marinomonas sp. (strain MWYL1).